The following is a 1196-amino-acid chain: MYLKSLTLKGFKSFASPTTLRFEPGITAVVGPNGSGKSNVVDALAWVMGEQGAKTLRGGKMEDVIFAGTSSRAPLGRAEVTVTIDNSDNALPIEYSEVSITRRMFRDGASEYEINGSSCRLMDVQELLSDSGIGREMHVIVGQGKLDEILQSRPEDRRAFIEEAAGVLKHRKRKEKALRKLDAMSANLARLTDLTTELRRQLKPLGRQAEVARRAQTIQADLRDARLRLAADDLVNRRGEREAIFEAEAAMRREHDEASARLAVASDELAAHEKALGELSGRAESVQQTWFALSALAERVAATVRIASERAQHLDLEPVTTGDTDPDALEAEAERVAAAEQQLLAELATARSRLETARAELAEREREAAEADRAHMAAVRAEADRREGLARLAGQVETMRARVESIDDSVARLSERIEAAAARAQQAKAEFETVQGRVGELDQGEVGLDEHHERTVAALRLADERVAELQAAERDAERKVASLRARIDALAVGLERKDGTAWLTENHSGAGILGPMAKLVKVRSGYEAAVAAVLGSAADALAADGLGAARSALGALKQADGGRAALVLGDWPADPPAPQPAPAGALWALDLIDAPERLRGAITAMLSGVAVVDDLDRALALVAEHPRLRAVTLDGDLVGAGWVSGGSDRKLSTLEVTSEIDKAGAELAAAEAQVAQLSAALSGALAEQAARQDSAEQALAALNESDSAISGMYEQLGRLGQEARTSEDEWSRLLRQREELEAGRTQTVAEVTELENRLRNAQETPQEPAAEPVNRQQIAAATDAARSAEVEARLAVRTAEERANAVRGRADSLRRAAAAEREARVRAQQAREARLRAAAVAAAVADSGRLLATRLNAVVAAASRIRDALAAERQQRATAMAAVRDEVNALSARVAALTDSLHSDEVANAQAALRIEQLEQMVLEQFGMAPADLIAEYGPHIALPPSELEMAEYEQAKERGEQVFAPAPIPFDRPTQERRAKRAERELAELGRVNPLALEEFAALEERYNFLSTQLEDVKAARKDLLGVVDEVDARILQVFSEAYTDVEREFSDVFGVLFPGGEGRLRLTDPSNMLTTGIEVEARPPGKKITRLSLLSGGEKALTAVAMLVAIFRARPSPFYIMDEVEAALDDTNLRRLISLFELLRARSQLIIITHQKPTMEVADALYGVTMQGDGITAVISQRMRGQQVDQLVTT.

32 to 39 (PNGSGKSN) is an ATP binding site. Coiled-coil stretches lie at residues 168-288 (LKHR…SVQQ) and 327-497 (DALE…LERK). An SMC hinge domain is found at 510–621 (AGILGPMAKL…VDDLDRALAL (112 aa)). 2 coiled-coil regions span residues 654 to 829 (LEVT…RAQQ) and 972 to 1026 (DRPT…KDLL).

Belongs to the SMC family. In terms of assembly, homodimer.

It is found in the cytoplasm. Required for chromosome condensation and partitioning. The sequence is that of Chromosome partition protein Smc from Mycolicibacterium paratuberculosis (strain ATCC BAA-968 / K-10) (Mycobacterium paratuberculosis).